The sequence spans 52 residues: Photosystem II reaction center protein M (52 aa).

The chain crosses the membrane as a helical span at residues 6-26 (FGFAASLLFVGVPTIFLIGLF). Residues 31-52 (DGEKSSFYSDTSKGRLSPEPKK) are disordered. Residues 42 to 52 (SKGRLSPEPKK) show a composition bias toward basic and acidic residues.

The protein belongs to the PsbM family. In terms of assembly, PSII is composed of 1 copy each of membrane proteins PsbA, PsbB, PsbC, PsbD, PsbE, PsbF, PsbH, PsbI, PsbJ, PsbK, PsbL, PsbM, PsbT, PsbX, PsbY, Psb30/Ycf12, peripheral proteins PsbO, CyanoQ (PsbQ), PsbU, PsbV and a large number of cofactors. It forms dimeric complexes.

The protein resides in the cellular thylakoid membrane. Its function is as follows. One of the components of the core complex of photosystem II (PSII). PSII is a light-driven water:plastoquinone oxidoreductase that uses light energy to abstract electrons from H(2)O, generating O(2) and a proton gradient subsequently used for ATP formation. It consists of a core antenna complex that captures photons, and an electron transfer chain that converts photonic excitation into a charge separation. This subunit is found at the monomer-monomer interface. This is Photosystem II reaction center protein M from Prochlorococcus marinus (strain NATL1A).